Consider the following 750-residue polypeptide: E3 ubiquitin-protein ligase rfwd3.S (750 aa).

A disordered region spans residues 92-206; that stretch reads RQAAEQRSSV…GAAPPAEPAP (115 aa). Over residues 105 to 116 the composition is skewed to basic residues; the sequence is RVQRRSTRRHQR. Over residues 122-144 the composition is skewed to polar residues; the sequence is TAGTSSRAALSNFFQINRTQGVA. Residues 168 to 181 are compositionally biased toward acidic residues; sequence SSDETVELSEEEEG. The RING-type; degenerate zinc-finger motif lies at 263 to 307; that stretch reads CAICFEPWTNAGQHRLSALRCGHLFGFTCIERWLKGGAAKCPQCN. Over residues 387 to 405 the composition is skewed to low complexity; it reads TSMQASSSRSTISGSLSSS. A disordered region spans residues 387–406; that stretch reads TSMQASSSRSTISGSLSSSQ. WD repeat units lie at residues 470-510, 512-552, and 558-603; these read IHSK…VVQT, NTGR…NCVQ, and GSRC…YRPH.

[4Fe-4S] cluster serves as cofactor.

Its subcellular location is the nucleus. It localises to the PML body. The protein resides in the cytoplasm. It carries out the reaction S-ubiquitinyl-[E2 ubiquitin-conjugating enzyme]-L-cysteine + [acceptor protein]-L-lysine = [E2 ubiquitin-conjugating enzyme]-L-cysteine + N(6)-ubiquitinyl-[acceptor protein]-L-lysine.. It functions in the pathway protein modification; protein ubiquitination. Functionally, E3 ubiquitin-protein ligase required for the repair of DNA interstrand cross-links (ICL) in response to DNA damage. Plays a key role in RPA-mediated DNA damage signaling and repair. Required to translesion DNA synthesis across DNA-protein cross-link adducts by catalyzing ubiquitination of proteins on single-stranded DNA (ssDNA). Mediates ubiquitination of the hmces DNA-protein cross-link, possibly promoting its degradation. The protein is E3 ubiquitin-protein ligase rfwd3.S (rfwd3.S) of Xenopus laevis (African clawed frog).